The primary structure comprises 158 residues: NAD(P)H-quinone oxidoreductase subunit J, chloroplastic (158 aa).

Belongs to the complex I 30 kDa subunit family. In terms of assembly, NDH is composed of at least 16 different subunits, 5 of which are encoded in the nucleus.

It is found in the plastid. The protein resides in the chloroplast thylakoid membrane. The enzyme catalyses a plastoquinone + NADH + (n+1) H(+)(in) = a plastoquinol + NAD(+) + n H(+)(out). It carries out the reaction a plastoquinone + NADPH + (n+1) H(+)(in) = a plastoquinol + NADP(+) + n H(+)(out). NDH shuttles electrons from NAD(P)H:plastoquinone, via FMN and iron-sulfur (Fe-S) centers, to quinones in the photosynthetic chain and possibly in a chloroplast respiratory chain. The immediate electron acceptor for the enzyme in this species is believed to be plastoquinone. Couples the redox reaction to proton translocation, and thus conserves the redox energy in a proton gradient. This Arabis hirsuta (Hairy rock-cress) protein is NAD(P)H-quinone oxidoreductase subunit J, chloroplastic.